Here is a 471-residue protein sequence, read N- to C-terminus: Vanillate/3-O-methylgallate O-demethylase (471 aa).

Residue Tyr-31 coordinates substrate. Gln-57 lines the (6S)-5,6,7,8-tetrahydrofolate pocket. His-60 lines the substrate pocket. Residues Gln-93 and Val-120 each coordinate (6S)-5,6,7,8-tetrahydrofolate. Arg-122 contacts substrate. Positions 165 and 215 each coordinate (6S)-5,6,7,8-tetrahydrofolate. Tyr-247–Asn-250 contacts substrate. Trp-256 contributes to the (6S)-5,6,7,8-tetrahydrofolate binding site.

Belongs to the GcvT family. As to quaternary structure, homodimer.

It catalyses the reaction vanillate + (6S)-5,6,7,8-tetrahydrofolate = (6S)-5-methyl-5,6,7,8-tetrahydrofolate + 3,4-dihydroxybenzoate. The catalysed reaction is 3-O-methylgallate + (6S)-5,6,7,8-tetrahydrofolate = 3,4,5-trihydroxybenzoate + (6S)-5-methyl-5,6,7,8-tetrahydrofolate. The protein operates within secondary metabolite metabolism; lignin degradation. In terms of biological role, involved in the catabolism of vanillate and syringate. Catalyzes the transfer of a methyl moiety from vanillate or 3-O-methylgallate (3MGA) to tetrahydrofolate, forming protocatechuate (PCA) or gallate, respectively, and methyl-tetrahydrofolate. Has similar activities with both substrates. Cannot use syringate. Uses an ordered, sequential kinetic mechanism. The chain is Vanillate/3-O-methylgallate O-demethylase from Sphingobium sp. (strain NBRC 103272 / SYK-6).